Consider the following 135-residue polypeptide: uncharacterized protein (135 aa).

The chain crosses the membrane as a helical span at residues 35–55 (VVLVLIGATIILVVISVLVVS).

Its subcellular location is the membrane. This is an uncharacterized protein from Saccharomyces cerevisiae (strain ATCC 204508 / S288c) (Baker's yeast).